We begin with the raw amino-acid sequence, 249 residues long: Isoprenyl transferase 1 (249 aa).

Aspartate 30 is an active-site residue. Aspartate 30 contacts Mg(2+). Substrate contacts are provided by residues 31–34 (GNGR), tryptophan 35, arginine 43, histidine 47, and 75–77 (STE). Residue asparagine 78 is the Proton acceptor of the active site. Residues tryptophan 79, arginine 81, arginine 198, and 204 to 206 (RMS) contribute to the substrate site. Mg(2+) is bound at residue glutamate 217.

The protein belongs to the UPP synthase family. Homodimer. The cofactor is Mg(2+).

Functionally, catalyzes the condensation of isopentenyl diphosphate (IPP) with allylic pyrophosphates generating different type of terpenoids. The polypeptide is Isoprenyl transferase 1 (Tropheryma whipplei (strain Twist) (Whipple's bacillus)).